A 236-amino-acid polypeptide reads, in one-letter code: 1-(5-phosphoribosyl)-5-[(5-phosphoribosylamino)methylideneamino] imidazole-4-carboxamide isomerase (236 aa).

The active-site Proton acceptor is aspartate 8. Aspartate 127 (proton donor) is an active-site residue.

This sequence belongs to the HisA/HisF family.

It is found in the cytoplasm. It carries out the reaction 1-(5-phospho-beta-D-ribosyl)-5-[(5-phospho-beta-D-ribosylamino)methylideneamino]imidazole-4-carboxamide = 5-[(5-phospho-1-deoxy-D-ribulos-1-ylimino)methylamino]-1-(5-phospho-beta-D-ribosyl)imidazole-4-carboxamide. It participates in amino-acid biosynthesis; L-histidine biosynthesis; L-histidine from 5-phospho-alpha-D-ribose 1-diphosphate: step 4/9. In Sulfurimonas denitrificans (strain ATCC 33889 / DSM 1251) (Thiomicrospira denitrificans (strain ATCC 33889 / DSM 1251)), this protein is 1-(5-phosphoribosyl)-5-[(5-phosphoribosylamino)methylideneamino] imidazole-4-carboxamide isomerase.